Reading from the N-terminus, the 237-residue chain is Proteasome subunit alpha type-5-B (237 aa).

Met-1 bears the N-acetylmethionine mark. Residues Lys-43, Lys-66, and Lys-185 each participate in a glycyl lysine isopeptide (Lys-Gly) (interchain with G-Cter in ubiquitin) cross-link.

Belongs to the peptidase T1A family. Component of the 20S core complex of the 26S proteasome. The 26S proteasome is composed of a core protease (CP), known as the 20S proteasome, capped at one or both ends by the 19S regulatory particle (RP/PA700). The 20S proteasome core is composed of 28 subunits that are arranged in four stacked rings, resulting in a barrel-shaped structure. The two end rings are each formed by seven alpha subunits, and the two central rings are each formed by seven beta subunits. The catalytic chamber with the active sites is on the inside of the barrel.

The protein resides in the cytoplasm. Its subcellular location is the nucleus. The proteasome is a multicatalytic proteinase complex which is characterized by its ability to cleave peptides with Arg, Phe, Tyr, Leu, and Glu adjacent to the leaving group at neutral or slightly basic pH. The proteasome has an ATP-dependent proteolytic activity. The protein is Proteasome subunit alpha type-5-B (PAE2) of Arabidopsis thaliana (Mouse-ear cress).